A 911-amino-acid polypeptide reads, in one-letter code: Probable 2-oxoadipate dehydrogenase complex component E1 homolog (911 aa).

The protein belongs to the alpha-ketoglutarate dehydrogenase family. The cofactor is thiamine diphosphate.

It localises to the mitochondrion. It carries out the reaction N(6)-[(R)-lipoyl]-L-lysyl-[protein] + 2-oxoadipate + H(+) = N(6)-[(R)-S(8)-glutaryldihydrolipoyl]-L-lysyl-[protein] + CO2. Functionally, 2-oxoadipate dehydrogenase (E1a) component of the 2-oxoadipate dehydrogenase complex (OADHC). Participates in the first step, rate limiting for the overall conversion of 2-oxoadipate (alpha-ketoadipate) to glutaryl-CoA and CO(2) catalyzed by the whole OADHC. Catalyzes the irreversible decarboxylation of 2-oxoadipate via the thiamine diphosphate (ThDP) cofactor and subsequent transfer of the decarboxylated acyl intermediate on an oxidized dihydrolipoyl group that is covalently amidated to the E2 enzyme (dihydrolipoyllysine-residue succinyltransferase or DLST). This Caenorhabditis elegans protein is Probable 2-oxoadipate dehydrogenase complex component E1 homolog.